We begin with the raw amino-acid sequence, 493 residues long: Glutamyl-tRNA(Gln) amidotransferase subunit A (493 aa).

Catalysis depends on charge relay system residues lysine 79 and serine 159. Residue serine 183 is the Acyl-ester intermediate of the active site.

It belongs to the amidase family. GatA subfamily. In terms of assembly, heterotrimer of A, B and C subunits.

The catalysed reaction is L-glutamyl-tRNA(Gln) + L-glutamine + ATP + H2O = L-glutaminyl-tRNA(Gln) + L-glutamate + ADP + phosphate + H(+). Allows the formation of correctly charged Gln-tRNA(Gln) through the transamidation of misacylated Glu-tRNA(Gln) in organisms which lack glutaminyl-tRNA synthetase. The reaction takes place in the presence of glutamine and ATP through an activated gamma-phospho-Glu-tRNA(Gln). The sequence is that of Glutamyl-tRNA(Gln) amidotransferase subunit A from Allorhizobium ampelinum (strain ATCC BAA-846 / DSM 112012 / S4) (Agrobacterium vitis (strain S4)).